Consider the following 288-residue polypeptide: 4-diphosphocytidyl-2-C-methyl-D-erythritol kinase (288 aa).

Residue K10 is part of the active site. 99-109 (PMGGGLGGGSS) is a binding site for ATP. Residue D141 is part of the active site.

This sequence belongs to the GHMP kinase family. IspE subfamily. As to quaternary structure, homodimer.

It carries out the reaction 4-CDP-2-C-methyl-D-erythritol + ATP = 4-CDP-2-C-methyl-D-erythritol 2-phosphate + ADP + H(+). It participates in isoprenoid biosynthesis; isopentenyl diphosphate biosynthesis via DXP pathway; isopentenyl diphosphate from 1-deoxy-D-xylulose 5-phosphate: step 3/6. Catalyzes the phosphorylation of the position 2 hydroxy group of 4-diphosphocytidyl-2C-methyl-D-erythritol. In Serratia proteamaculans (strain 568), this protein is 4-diphosphocytidyl-2-C-methyl-D-erythritol kinase.